We begin with the raw amino-acid sequence, 298 residues long: Chitin deacetylase (298 aa).

Residues 1–16 form the signal peptide; that stretch reads MLAPLFAALLAGAATA. The 184-residue stretch at 39–222 folds into the NodB homology domain; sequence NTFALTFDDG…AIKAKGLTPV (184 aa). The Proton acceptor role is filled by D46. D46 is an acetate binding site. The Co(2+) site is built by D47, H99, and H103. Y140 contacts acetate. Catalysis depends on H196, which acts as the Proton donor. Residues 256 to 298 form the Chitin-binding type-1 domain; it reads DDTCGGSNGYVCQNSQCCSQWGWCGTTSEYCAAGCQAAYGPCT. Disulfide bonds link C259-C273, C267-C279, C272-C286, and C290-C297.

This sequence belongs to the polysaccharide deacetylase family. It depends on Co(2+) as a cofactor.

Its subcellular location is the secreted. It carries out the reaction [(1-&gt;4)-N-acetyl-beta-D-glucosaminyl](n) + n H2O = chitosan + n acetate. With respect to regulation, inhibited by Fe(2+) and to a lesser extent by Mn(2+). Its function is as follows. Hydrolyzes the N-acetamido groups of N-acetyl-D-glucosamine polymers in chitin to form chitosan and acetate. May play a role in evasion of the host immune response; plant chitinases liberate chitin molecules from the fungal cell wall which act as elicitors of the plant immune response, deacetylation of the liberated chitin neutralizes elicitor activity. The chain is Chitin deacetylase from Pestalotiopsis sp.